We begin with the raw amino-acid sequence, 396 residues long: Elongation factor Tu (396 aa).

The region spanning 10 to 205 (KPHVNIGTIG…ACDDNIPDPV (196 aa)) is the tr-type G domain. The interval 19-26 (GHVDHGKT) is G1. 19 to 26 (GHVDHGKT) lines the GTP pocket. Thr26 is a Mg(2+) binding site. The G2 stretch occupies residues 62–66 (GITIN). Positions 83-86 (DAPG) are G3. GTP is bound by residues 83 to 87 (DAPGH) and 138 to 141 (NKCD). A G4 region spans residues 138 to 141 (NKCD). Positions 175 to 177 (SAL) are G5.

It belongs to the TRAFAC class translation factor GTPase superfamily. Classic translation factor GTPase family. EF-Tu/EF-1A subfamily. Monomer.

The protein resides in the cytoplasm. It carries out the reaction GTP + H2O = GDP + phosphate + H(+). In terms of biological role, GTP hydrolase that promotes the GTP-dependent binding of aminoacyl-tRNA to the A-site of ribosomes during protein biosynthesis. In Corynebacterium glutamicum (strain ATCC 13032 / DSM 20300 / JCM 1318 / BCRC 11384 / CCUG 27702 / LMG 3730 / NBRC 12168 / NCIMB 10025 / NRRL B-2784 / 534), this protein is Elongation factor Tu.